The primary structure comprises 295 residues: Protoheme IX farnesyltransferase 2 (295 aa).

Helical transmembrane passes span 9–29, 36–56, 83–103, 108–128, 135–155, 163–183, 209–229, 230–250, and 264–284; these read ITKP…FFLA, FALF…GCVF, LTLA…LLYV, LSAF…SLWL, GTLV…CAVS, VTLL…IAIF, IVLY…GGYA, GLGY…MAWG, and VFGF…VDSQ.

Belongs to the UbiA prenyltransferase family. Protoheme IX farnesyltransferase subfamily.

It is found in the cell inner membrane. The catalysed reaction is heme b + (2E,6E)-farnesyl diphosphate + H2O = Fe(II)-heme o + diphosphate. It participates in porphyrin-containing compound metabolism; heme O biosynthesis; heme O from protoheme: step 1/1. In terms of biological role, converts heme B (protoheme IX) to heme O by substitution of the vinyl group on carbon 2 of heme B porphyrin ring with a hydroxyethyl farnesyl side group. This Pseudomonas putida (strain W619) protein is Protoheme IX farnesyltransferase 2.